Here is a 359-residue protein sequence, read N- to C-terminus: Apelin receptor B (359 aa).

Residues 1–36 (MNAMDNMTADYSPDYFDDAVNSSMCEYDEWEPSYSL) are Extracellular-facing. 2 N-linked (GlcNAc...) asparagine glycosylation sites follow: N6 and N21. 2 disulfide bridges follow: C25-C288 and C107-C186. The chain crosses the membrane as a helical span at residues 37-57 (IPVLYMLIFILGLTGNGVVIF). The Cytoplasmic portion of the chain corresponds to 58-75 (TVWRAQSKRRAADVYIGN). A helical transmembrane segment spans residues 76-96 (LALADLTFVVTLPLWAVYTAL). Topologically, residues 97 to 108 (GYHWPFGVALCK) are extracellular. A helical transmembrane segment spans residues 109–129 (ISSYVVLLNMYASVFCLTCLS). Over 130–151 (LDRYMAIVHSLTSTQLRTRGHM) the chain is Cytoplasmic. The chain crosses the membrane as a helical span at residues 152–172 (RASLTAIWLLSGVLAAPTLLF). Residues 173-213 (RTTVYDVETNRTSCAMDFNLVVSQPGQETYWIAGLSISSTA) lie on the Extracellular side of the membrane. Residue N182 is glycosylated (N-linked (GlcNAc...) asparagine). The helical transmembrane segment at 214–234 (LGFLIPLLAMMVCYGFIGCTV) threads the bilayer. The Cytoplasmic segment spans residues 235 to 251 (TRHFNSLRKEDQRKRRL). The helical transmembrane segment at 252 to 272 (LKIITTLVVVFAACWMPFHVV) threads the bilayer. Over 273 to 286 (KTMDALSYLNLAPD) the chain is Extracellular. The chain crosses the membrane as a helical span at residues 287-307 (SCTFLNLLLLAHPYATCLAYV). Topologically, residues 308–359 (NSCLNPLLYAFFDLRFRSQCLCLLNLKKALHASPASSLSSQKTEAQSLATKV) are cytoplasmic.

Belongs to the G-protein coupled receptor 1 family. As to expression, mesendodermal expression at the blastoderm margin appears by 4.5 hpf. At early gastrulation, expression is maintained ventrolaterally while expression in dorsal cells and random deep cells declines. During gastrulation and segmentation, expression is maintained in adaxial, intermediate, and lateral plate mesoderm. During late segmentation, expressed in several regions including the forming heart. By 24 hpf, expressed in the dorsal aorta, caudal vein, and intersomitic blood vessels.

The protein resides in the cell membrane. Functionally, g protein-coupled receptor for peptide hormones apelin (apln) and apelin receptor early endogenous ligand (apela), that plays a role in the regulation of normal cardiovascular function and fluid homeostasis. When acting as apelin receptor, activates both G(i) protein pathway that inhibits adenylate cyclase activity, and the beta-arrestin pathway that promotes internalization of the receptor. Also functions as mechanoreceptor that is activated by pathological stimuli in a G-protein-independent fashion to induce beta-arrestin signaling, hence eliciting cardiac hypertrophy. However, the presence of apelin ligand blunts cardiac hypertrophic induction from APLNR/APJ on response to pathological stimuli. Plays a key role in early development such as gastrulation, blood vessels formation and heart morphogenesis by acting as a receptor for apela hormone, promoting endoderm and mesendoderm cell migration and regulating the migration of cells fated to become myocardial progenitors, respectively. Positively regulates angioblast migration toward the embryonic midline, i.e. the position of the future vessel formation, during vasculogenesis. May promote sinus venosus (SV)-derived endothelial cells migration into the developing heart to promote coronary blood vessel development. Required for cardiovascular development, particularly for intersomitic vein angiogenesis by acting as a receptor for apln hormone. Plays a role in various processes in adults such as regulation of blood vessel formation, blood pressure, heart contractility and heart failure. Acts redundantly with agtrl1a in heart development. In terms of biological role, g protein-coupled receptor for peptide hormones apelin (APLN) and apelin receptor early endogenous ligand (APELA/ELA), that plays a role in the regulation of normal cardiovascular function and fluid homeostasis. When acting as apelin receptor, activates both G(i) protein pathway that inhibits adenylate cyclase activity, and the beta-arrestin pathway that promotes internalization of the receptor. APLNR/APJ also functions as mechanoreceptor that is activated by pathological stimuli in a G-protein-independent fashion to induce beta-arrestin signaling, hence eliciting cardiac hypertrophy. Plays a key role in early development such as gastrulation, blood vessels formation and heart morphogenesis by acting as a APELA receptor. May promote angioblast migration toward the embryonic midline, i.e. the position of the future vessel formation, during vasculogenesis. Promotes sinus venosus (SV)-derived endothelial cells migration into the developing heart to promote coronary blood vessel development. Also plays a role in various processes in adults such as regulation of blood vessel formation, blood pressure, heart contractility and heart failure. In Danio rerio (Zebrafish), this protein is Apelin receptor B (aplnrb).